A 564-amino-acid chain; its full sequence is Urocanate hydratase (564 aa).

Residues glycine 54 to glycine 55, glutamine 132, glycine 178 to glycine 180, glutamate 198, arginine 203, asparagine 244 to alanine 245, glutamine 269 to histidine 273, tyrosine 279 to leucine 280, and tyrosine 328 each bind NAD(+). Cysteine 416 is an active-site residue. Glycine 498 provides a ligand contact to NAD(+).

This sequence belongs to the urocanase family. As to quaternary structure, homodimer. It depends on NAD(+) as a cofactor.

It catalyses the reaction 4-imidazolone-5-propanoate = trans-urocanate + H2O. It functions in the pathway amino-acid degradation; L-histidine degradation into L-glutamate; N-formimidoyl-L-glutamate from L-histidine: step 2/3. The chain is Urocanate hydratase from Trifolium repens (Creeping white clover).